Here is a 142-residue protein sequence, read N- to C-terminus: Alpha-lactalbumin (142 aa).

The N-terminal stretch at 1 to 19 is a signal peptide; sequence MMSFVSLLLVGILFHATQA. In terms of domain architecture, C-type lysozyme spans 20-142; the sequence is EQLTKCEVFR…KLDQWLCEKL (123 aa). 4 disulfides stabilise this stretch: Cys25/Cys139, Cys47/Cys130, Cys80/Cys96, and Cys92/Cys110. N-linked (GlcNAc...) asparagine glycosylation is present at Asn64. Ca(2+) contacts are provided by Lys98, Asp101, Asp103, Asp106, and Asp107.

This sequence belongs to the glycosyl hydrolase 22 family. In terms of assembly, lactose synthase (LS) is a heterodimer of a catalytic component, beta1,4-galactosyltransferase (beta4Gal-T1) and a regulatory component, alpha-lactalbumin (LA). As to expression, mammary gland specific. Secreted in milk.

The protein resides in the secreted. Regulatory subunit of lactose synthase, changes the substrate specificity of galactosyltransferase in the mammary gland making glucose a good acceptor substrate for this enzyme. This enables LS to synthesize lactose, the major carbohydrate component of milk. In other tissues, galactosyltransferase transfers galactose onto the N-acetylglucosamine of the oligosaccharide chains in glycoproteins. The chain is Alpha-lactalbumin (LALBA) from Bos taurus (Bovine).